Consider the following 206-residue polypeptide: Large ribosomal subunit protein uL4 (206 aa).

Residues 48–97 (THAVKNRSLVSGGGKKPWKQKHTGRARQGSTRASQWVGGGKAMGPKPRDY) form a disordered region. The segment covering 63-72 (KPWKQKHTGR) has biased composition (basic residues).

Belongs to the universal ribosomal protein uL4 family. In terms of assembly, part of the 50S ribosomal subunit.

Functionally, one of the primary rRNA binding proteins, this protein initially binds near the 5'-end of the 23S rRNA. It is important during the early stages of 50S assembly. It makes multiple contacts with different domains of the 23S rRNA in the assembled 50S subunit and ribosome. Forms part of the polypeptide exit tunnel. The polypeptide is Large ribosomal subunit protein uL4 (Anaeromyxobacter sp. (strain K)).